The primary structure comprises 163 residues: Cyclic pyranopterin monophosphate synthase (163 aa).

Residues 75–77 (LCH) and 113–114 (ME) contribute to the substrate site. Asp128 is an active-site residue.

It belongs to the MoaC family. As to quaternary structure, homohexamer; trimer of dimers.

It carries out the reaction (8S)-3',8-cyclo-7,8-dihydroguanosine 5'-triphosphate = cyclic pyranopterin phosphate + diphosphate. It functions in the pathway cofactor biosynthesis; molybdopterin biosynthesis. Functionally, catalyzes the conversion of (8S)-3',8-cyclo-7,8-dihydroguanosine 5'-triphosphate to cyclic pyranopterin monophosphate (cPMP). The protein is Cyclic pyranopterin monophosphate synthase of Magnetococcus marinus (strain ATCC BAA-1437 / JCM 17883 / MC-1).